Reading from the N-terminus, the 129-residue chain is Small ribosomal subunit protein uS11 (129 aa).

This sequence belongs to the universal ribosomal protein uS11 family. Part of the 30S ribosomal subunit. Interacts with proteins S7 and S18. Binds to IF-3.

Functionally, located on the platform of the 30S subunit, it bridges several disparate RNA helices of the 16S rRNA. Forms part of the Shine-Dalgarno cleft in the 70S ribosome. In Stenotrophomonas maltophilia (strain R551-3), this protein is Small ribosomal subunit protein uS11.